The following is a 245-amino-acid chain: 1-(5-phosphoribosyl)-5-[(5-phosphoribosylamino)methylideneamino] imidazole-4-carboxamide isomerase (245 aa).

Asp-7 functions as the Proton acceptor in the catalytic mechanism. The active-site Proton donor is the Asp-129.

Belongs to the HisA/HisF family.

Its subcellular location is the cytoplasm. It catalyses the reaction 1-(5-phospho-beta-D-ribosyl)-5-[(5-phospho-beta-D-ribosylamino)methylideneamino]imidazole-4-carboxamide = 5-[(5-phospho-1-deoxy-D-ribulos-1-ylimino)methylamino]-1-(5-phospho-beta-D-ribosyl)imidazole-4-carboxamide. Its pathway is amino-acid biosynthesis; L-histidine biosynthesis; L-histidine from 5-phospho-alpha-D-ribose 1-diphosphate: step 4/9. The polypeptide is 1-(5-phosphoribosyl)-5-[(5-phosphoribosylamino)methylideneamino] imidazole-4-carboxamide isomerase (Shewanella oneidensis (strain ATCC 700550 / JCM 31522 / CIP 106686 / LMG 19005 / NCIMB 14063 / MR-1)).